Consider the following 334-residue polypeptide: GTP 3',8-cyclase (334 aa).

Residues 13-239 (RFHRKFYYLR…KVKAVNDGPA (227 aa)) enclose the Radical SAM core domain. Arg22 is a binding site for GTP. [4Fe-4S] cluster is bound by residues Cys29 and Cys33. Tyr35 is a binding site for S-adenosyl-L-methionine. Cys36 serves as a coordination point for [4Fe-4S] cluster. GTP is bound at residue Arg73. Gly77 serves as a coordination point for S-adenosyl-L-methionine. Position 104 (Thr104) interacts with GTP. Position 128 (Ser128) interacts with S-adenosyl-L-methionine. Lys165 contacts GTP. Met199 provides a ligand contact to S-adenosyl-L-methionine. Cys262 and Cys265 together coordinate [4Fe-4S] cluster. 267–269 (RLR) provides a ligand contact to GTP. A [4Fe-4S] cluster-binding site is contributed by Cys279.

This sequence belongs to the radical SAM superfamily. MoaA family. In terms of assembly, monomer and homodimer. [4Fe-4S] cluster serves as cofactor.

It carries out the reaction GTP + AH2 + S-adenosyl-L-methionine = (8S)-3',8-cyclo-7,8-dihydroguanosine 5'-triphosphate + 5'-deoxyadenosine + L-methionine + A + H(+). It functions in the pathway cofactor biosynthesis; molybdopterin biosynthesis. Catalyzes the cyclization of GTP to (8S)-3',8-cyclo-7,8-dihydroguanosine 5'-triphosphate. This chain is GTP 3',8-cyclase, found in Vibrio atlanticus (strain LGP32) (Vibrio splendidus (strain Mel32)).